Consider the following 447-residue polypeptide: UDP-N-acetylglucosamine 1-carboxyvinyltransferase (447 aa).

A phosphoenolpyruvate-binding site is contributed by 27–28 (KN). Arg97 lines the UDP-N-acetyl-alpha-D-glucosamine pocket. Cys121 (proton donor) is an active-site residue. Cys121 bears the 2-(S-cysteinyl)pyruvic acid O-phosphothioketal mark. UDP-N-acetyl-alpha-D-glucosamine is bound by residues 126 to 130 (RPVDL), Asp314, and Val336.

The protein belongs to the EPSP synthase family. MurA subfamily.

The protein resides in the cytoplasm. The enzyme catalyses phosphoenolpyruvate + UDP-N-acetyl-alpha-D-glucosamine = UDP-N-acetyl-3-O-(1-carboxyvinyl)-alpha-D-glucosamine + phosphate. Its pathway is cell wall biogenesis; peptidoglycan biosynthesis. In terms of biological role, cell wall formation. Adds enolpyruvyl to UDP-N-acetylglucosamine. In Trichormus variabilis (strain ATCC 29413 / PCC 7937) (Anabaena variabilis), this protein is UDP-N-acetylglucosamine 1-carboxyvinyltransferase.